The primary structure comprises 251 residues: MPAKLSVNLNAIAMLRNRRDLPWPDVAHFGQIALSAGASGLTVHPRPDQRHIRFSDLPVLRALIDDRFPGAEFNIEGYPTEDFLVLCEKTQPEQVTLVPDDPSQATSDHGWDFRKHAVFLKDVVGRLKAGGMRVSLFADGDGEREPVELAAETGAARIELYTGPYGGCFDDTQKADLLVEKLGQTADHAAALGLAVNAGHDLTVANLPKLMKRIPNLAEVSIGHGLTADAMEYGMAETVRRFCQACGQRNS.

Residues Asn-8 and Arg-19 each contribute to the 3-amino-2-oxopropyl phosphate site. His-44 acts as the Proton acceptor in catalysis. Residues Arg-46 and His-51 each contribute to the 1-deoxy-D-xylulose 5-phosphate site. The active-site Proton acceptor is the Glu-76. Thr-106 is a binding site for 1-deoxy-D-xylulose 5-phosphate. His-200 acts as the Proton donor in catalysis. Residues Asp-201 and 223–224 (GH) each bind 3-amino-2-oxopropyl phosphate.

This sequence belongs to the PNP synthase family. As to quaternary structure, homooctamer; tetramer of dimers.

The protein resides in the cytoplasm. The enzyme catalyses 3-amino-2-oxopropyl phosphate + 1-deoxy-D-xylulose 5-phosphate = pyridoxine 5'-phosphate + phosphate + 2 H2O + H(+). It participates in cofactor biosynthesis; pyridoxine 5'-phosphate biosynthesis; pyridoxine 5'-phosphate from D-erythrose 4-phosphate: step 5/5. Functionally, catalyzes the complicated ring closure reaction between the two acyclic compounds 1-deoxy-D-xylulose-5-phosphate (DXP) and 3-amino-2-oxopropyl phosphate (1-amino-acetone-3-phosphate or AAP) to form pyridoxine 5'-phosphate (PNP) and inorganic phosphate. The protein is Pyridoxine 5'-phosphate synthase of Agrobacterium fabrum (strain C58 / ATCC 33970) (Agrobacterium tumefaciens (strain C58)).